The chain runs to 399 residues: S-adenosylmethionine synthase (399 aa).

Residue H15 coordinates ATP. Residue D17 participates in Mg(2+) binding. E43 contacts K(+). L-methionine is bound by residues E56 and Q99. The tract at residues 99–109 (QSPDIADGVDH) is flexible loop. Residues 175 to 177 (DAK), 242 to 243 (RF), D251, 257 to 258 (RK), A274, and K278 each bind ATP. D251 lines the L-methionine pocket. Residue K282 coordinates L-methionine.

Belongs to the AdoMet synthase family. Homotetramer; dimer of dimers. It depends on Mg(2+) as a cofactor. K(+) serves as cofactor.

Its subcellular location is the cytoplasm. It carries out the reaction L-methionine + ATP + H2O = S-adenosyl-L-methionine + phosphate + diphosphate. It functions in the pathway amino-acid biosynthesis; S-adenosyl-L-methionine biosynthesis; S-adenosyl-L-methionine from L-methionine: step 1/1. Its function is as follows. Catalyzes the formation of S-adenosylmethionine (AdoMet) from methionine and ATP. The overall synthetic reaction is composed of two sequential steps, AdoMet formation and the subsequent tripolyphosphate hydrolysis which occurs prior to release of AdoMet from the enzyme. The sequence is that of S-adenosylmethionine synthase from Lactobacillus acidophilus (strain ATCC 700396 / NCK56 / N2 / NCFM).